Consider the following 397-residue polypeptide: FAD-dependent monooxygenase trt8 (397 aa).

Tyr-53 is a catalytic residue. FAD-binding residues include Asp-145 and Ala-158.

Belongs to the paxM FAD-dependent monooxygenase family. Requires FAD as cofactor.

It functions in the pathway secondary metabolite biosynthesis; terpenoid biosynthesis. Its function is as follows. FAD-dependent monooxygenase; part of the gene cluster that mediates the biosynthesis of terretonin, a fungal meroterpenoid that acts as a mycotoxin. The first step of the pathway is the synthesis of 3,5-dimethylorsellinic acid (DMOA) by the polyketide synthase trt4. DMOA is then prenylated into farnesyl-DMOA by the polyprenyl transferase trt2. Methylation by the methyltransferase trt5 then leads to farnesyl-DMOA methyl ester which is further subject to epoxidation by the FAD-dependent monooxygenase trt8 to yield epoxyfarnesyl-DMOA methyl ester. Cyclization of epoxyfarnesyl-DMOA methyl ester by the terpene cyclase trt1 leads to a tetracycle intermediate which is in turn converted to preterretonin. Dehydrogenase trt9 comes next to transform preterretonin to preterrenoid. The FAD-dependent monooxygenase trt3 is then required for the C-hydroxylation at C16 of preterrenoid to yield terrenoid. The cytochrome P450 trt6 catalyzes three successive oxidations to transform terrenoid into an unstable intermediate, which then undergoes the D-ring expansion and unusual rearrangement of the methoxy group to afford the core skeleton of terretonin. Trt14 catalyzes the D-ring expansion of terretonin involving intramolecular methoxy rearrangement as well as the hydrolysis of the expanded D-ring and the methyl ester moiety. Finally, the nonheme iron-dependent dioxygenase trt7 accomplishes the last two oxidation reactions steps to complete the biosynthesis of terretonin. Terretonin C is produced via spontaneous decarboxylation of the terretonin precursor. Another shunt product of the terretonin biosynthesis is dihydrofarnesyl-DMOA, derived from epoxyfarnesyl-DMOA through hydrolysis of the epoxide. The chain is FAD-dependent monooxygenase trt8 from Aspergillus terreus (strain NIH 2624 / FGSC A1156).